A 172-amino-acid chain; its full sequence is Protein CapG (172 aa).

The protein belongs to the transferase hexapeptide repeat family.

It functions in the pathway capsule biogenesis; capsule polysaccharide biosynthesis. Required for the biosynthesis of type 1 capsular polysaccharide. The polypeptide is Protein CapG (capG) (Staphylococcus aureus).